The following is an 890-amino-acid chain: Nucleoside hydrolase 3 (890 aa).

Residues 1–21 (MLTSPTLKSLWFLFTILGLLG) form the signal peptide. 7 N-linked (GlcNAc...) asparagine glycosylation sites follow: Asn-55, Asn-232, Asn-371, Asn-485, Asn-580, Asn-655, and Asn-740.

The protein belongs to the IUNH family.

It localises to the secreted. It is found in the extracellular space. The protein localises to the apoplast. It carries out the reaction a purine D-ribonucleoside + H2O = a purine nucleobase + D-ribose. The enzyme catalyses inosine + H2O = hypoxanthine + D-ribose. The catalysed reaction is adenosine + H2O = D-ribose + adenine. Extracellular purine-specific hydrolase present in the apoplastic fluid involved in the degradation of extracellular nucleosides, including inosine and adenosine, and which may participate in wound and pathogen responses (e.g. Botrytis cinerea). The protein is Nucleoside hydrolase 3 of Arabidopsis thaliana (Mouse-ear cress).